A 337-amino-acid chain; its full sequence is Anthranilate phosphoribosyltransferase (337 aa).

5-phospho-alpha-D-ribose 1-diphosphate is bound by residues Gly-80, 83–84, Thr-88, 90–93, 108–116, and Ser-120; these read GD, NIST, and KHGNRAVSS. An anthranilate-binding site is contributed by Gly-80. Residue Ser-92 coordinates Mg(2+). Asn-111 lines the anthranilate pocket. Position 166 (Arg-166) interacts with anthranilate. Mg(2+)-binding residues include Asp-224 and Glu-225.

Belongs to the anthranilate phosphoribosyltransferase family. Homodimer. The cofactor is Mg(2+).

It catalyses the reaction N-(5-phospho-beta-D-ribosyl)anthranilate + diphosphate = 5-phospho-alpha-D-ribose 1-diphosphate + anthranilate. The protein operates within amino-acid biosynthesis; L-tryptophan biosynthesis; L-tryptophan from chorismate: step 2/5. Catalyzes the transfer of the phosphoribosyl group of 5-phosphorylribose-1-pyrophosphate (PRPP) to anthranilate to yield N-(5'-phosphoribosyl)-anthranilate (PRA). The polypeptide is Anthranilate phosphoribosyltransferase (Anaeromyxobacter dehalogenans (strain 2CP-1 / ATCC BAA-258)).